The sequence spans 219 residues: Probable N-acetyltransferase camello (219 aa).

The next 2 membrane-spanning stretches (helical) occupy residues 44–64 (FITFVAFTSVFMGTGSYVLAL) and 66–86 (SLVALLAAGWYGLYSEFHGLA). The 150-residue stretch at 62-211 (LALTSLVALL…VHQYTSFTVA (150 aa)) folds into the N-acetyltransferase domain.

This sequence belongs to the camello family.

It localises to the golgi apparatus membrane. In terms of biological role, plays a role in regulation of gastrulation, possibly by controlled reduction of cell adhesion in the periblastopore region which is necessary for optimal cell motility. This chain is Probable N-acetyltransferase camello, found in Xenopus tropicalis (Western clawed frog).